We begin with the raw amino-acid sequence, 621 residues long: Frizzled and smoothened-like protein H (621 aa).

Positions 1-21 are cleaved as a signal peptide; it reads MNLKFYNLIFFISFLICCIHG. Topologically, residues 22–246 are extracellular; that stretch reads QRYLPVEGGK…VWNQIFKIND (225 aa). The 140-residue stretch at 27-166 folds into the FZ domain; sequence VEGGKCEKYI…IEWVKYNLTI (140 aa). Disulfide bonds link Cys-32/Cys-103 and Cys-46/Cys-96. 5 N-linked (GlcNAc...) asparagine glycosylation sites follow: Asn-60, Asn-107, Asn-163, Asn-176, and Asn-206. A helical transmembrane segment spans residues 247–267; sequence VLSSISLACTLILLFTFGILN. At 268 to 277 the chain is on the cytoplasmic side; sequence PKLNRFDKKN. The chain crosses the membrane as a helical span at residues 278–298; the sequence is LFFIAGVFGMSVSGVLIAANG. Over 299-318 the chain is Extracellular; the sequence is SEKTVCPTPERYAVNTDRVC. A helical membrane pass occupies residues 319–339; the sequence is VASGFLVHFSALFAILWWTIG. The Cytoplasmic portion of the chain corresponds to 340 to 359; that stretch reads LADVYYGIKFVGKKIKIKVR. A helical transmembrane segment spans residues 360–380; the sequence is YYLLATLTISLAFTLVPLGTG. Residues 381–400 lie on the Extracellular side of the membrane; sequence QYQAGLSNVMCFLKDEIYQS. Residues 401-421 form a helical membrane-spanning segment; sequence MTFFVPLGICLTMGTILMILV. Residues 422 to 464 are Cytoplasmic-facing; it reads MREIYVIVKSNSTSSSFSSSSSKSKSKSKSSDSISYLKLQVKP. Residues 465–485 traverse the membrane as a helical segment; the sequence is MLNIILFYFTFLYLFLFVRVI. Residues 486 to 520 lie on the Extracellular side of the membrane; that stretch reads NSRYQEYEDSAIPYMLCLAKGGGDSCRLKGPSAGS. The chain crosses the membrane as a helical span at residues 521–541; that stretch reads LGYFAYCLRIYGIYLFIISFL. Residues 542–621 are Cytoplasmic-facing; the sequence is SSRTIKIWKE…RNYNTDDDDL (80 aa). Residues 575–594 show a composition bias toward low complexity; the sequence is FSSSKNTSTTQNSTLNNTES. Positions 575–603 are disordered; that stretch reads FSSSKNTSTTQNSTLNNTESDTSKRGNSS.

This sequence belongs to the G-protein coupled receptor Fz/Smo family.

The protein resides in the membrane. The protein is Frizzled and smoothened-like protein H (fslH) of Dictyostelium discoideum (Social amoeba).